The chain runs to 252 residues: Ditrans,polycis-undecaprenyl-diphosphate synthase ((2E,6E)-farnesyl-diphosphate specific) (252 aa).

Residue Asp24 is part of the active site. Asp24 is a Mg(2+) binding site. Substrate is bound by residues 25–28 (GNGR), Trp29, Arg37, His41, and 69–71 (SSE). Asn72 acts as the Proton acceptor in catalysis. Residues Trp73, Arg75, and Arg192 each contribute to the substrate site. Residue His197 coordinates Mg(2+). Residue 198–200 (RIS) participates in substrate binding. Glu211 lines the Mg(2+) pocket.

The protein belongs to the UPP synthase family. In terms of assembly, homodimer. Mg(2+) serves as cofactor.

It carries out the reaction 8 isopentenyl diphosphate + (2E,6E)-farnesyl diphosphate = di-trans,octa-cis-undecaprenyl diphosphate + 8 diphosphate. Its function is as follows. Catalyzes the sequential condensation of isopentenyl diphosphate (IPP) with (2E,6E)-farnesyl diphosphate (E,E-FPP) to yield (2Z,6Z,10Z,14Z,18Z,22Z,26Z,30Z,34E,38E)-undecaprenyl diphosphate (di-trans,octa-cis-UPP). UPP is the precursor of glycosyl carrier lipid in the biosynthesis of bacterial cell wall polysaccharide components such as peptidoglycan and lipopolysaccharide. The protein is Ditrans,polycis-undecaprenyl-diphosphate synthase ((2E,6E)-farnesyl-diphosphate specific) of Yersinia pestis.